The chain runs to 473 residues: ATP synthase subunit beta (473 aa).

ATP is bound at residue Gly-153–Thr-160.

Belongs to the ATPase alpha/beta chains family. As to quaternary structure, F-type ATPases have 2 components, CF(1) - the catalytic core - and CF(0) - the membrane proton channel. CF(1) has five subunits: alpha(3), beta(3), gamma(1), delta(1), epsilon(1). CF(0) has three main subunits: a(1), b(2) and c(9-12). The alpha and beta chains form an alternating ring which encloses part of the gamma chain. CF(1) is attached to CF(0) by a central stalk formed by the gamma and epsilon chains, while a peripheral stalk is formed by the delta and b chains.

The protein localises to the cell inner membrane. The catalysed reaction is ATP + H2O + 4 H(+)(in) = ADP + phosphate + 5 H(+)(out). In terms of biological role, produces ATP from ADP in the presence of a proton gradient across the membrane. The catalytic sites are hosted primarily by the beta subunits. This chain is ATP synthase subunit beta, found in Rickettsia bellii (strain RML369-C).